A 188-amino-acid chain; its full sequence is Elongation factor P (188 aa).

This sequence belongs to the elongation factor P family.

The protein localises to the cytoplasm. It functions in the pathway protein biosynthesis; polypeptide chain elongation. Functionally, involved in peptide bond synthesis. Stimulates efficient translation and peptide-bond synthesis on native or reconstituted 70S ribosomes in vitro. Probably functions indirectly by altering the affinity of the ribosome for aminoacyl-tRNA, thus increasing their reactivity as acceptors for peptidyl transferase. The chain is Elongation factor P from Exiguobacterium sibiricum (strain DSM 17290 / CCUG 55495 / CIP 109462 / JCM 13490 / 255-15).